Here is a 229-residue protein sequence, read N- to C-terminus: Heptaprenylglyceryl phosphate synthase (229 aa).

Lys12 is a sn-glycerol 1-phosphate binding site. Positions 14 and 40 each coordinate Mg(2+). Sn-glycerol 1-phosphate is bound by residues 159 to 164, Gly189, and 209 to 210; these read YIEYSG and GN.

This sequence belongs to the GGGP/HepGP synthase family. Group I subfamily. Homodimer. Mg(2+) serves as cofactor.

It carries out the reaction sn-glycerol 1-phosphate + all-trans-heptaprenyl diphosphate = 3-heptaprenyl-sn-glycero-1-phosphate + diphosphate. It functions in the pathway membrane lipid metabolism; glycerophospholipid metabolism. In terms of biological role, prenyltransferase that catalyzes in vivo the transfer of the heptaprenyl moiety of heptaprenyl pyrophosphate (HepPP; 35 carbon atoms) to the C3 hydroxyl of sn-glycerol-1-phosphate (G1P), producing heptaprenylglyceryl phosphate (HepGP). This reaction is an ether-bond-formation step in the biosynthesis of archaea-type G1P-based membrane lipids found in Bacillales. In Staphylococcus saprophyticus subsp. saprophyticus (strain ATCC 15305 / DSM 20229 / NCIMB 8711 / NCTC 7292 / S-41), this protein is Heptaprenylglyceryl phosphate synthase.